Consider the following 614-residue polypeptide: Vitamin B12 transporter BtuB (614 aa).

A signal peptide spans 1-20 (MIKKASLLTACSVTAFSAWA). The TonB box motif lies at 26–33 (DTLVVTAN). A TBDR plug domain is found at 38-152 (PRSTVLAPTT…IGGVVNIITT (115 aa)). Residues Leu-83, Ser-85, Asn-92, and 110 to 111 (VS) each bind cyanocob(III)alamin. Positions 155-614 (EPGTEISAGW…EYTLSGSYTF (460 aa)) constitute a TBDR beta-barrel domain. Beta stranded transmembrane passes span 158–165 (TEISAGWG), 169–178 (YQNYDVSTQQ), and 184–195 (TRVTLLGDYAHT). Positions 199, 211, 213, and 215 each coordinate Ca(2+). Transmembrane regions (beta stranded) follow at residues 217 to 227 (FLSKTLYGALE) and 232 to 248 (DAWSGFVRGYGYDNRTN). Positions 249 and 250 each coordinate Ca(2+). A cyanocob(III)alamin-binding site is contributed by Ala-251. Asp-261 provides a ligand contact to Ca(2+). The next 14 membrane-spanning stretches (beta stranded) occupy residues 263–277 (RKLYSQSWDAGLRYN), 279–296 (ELIKSQLITSYSHSKDYN), 309–325 (TLDEMKQYTVQWANNVI), 328–337 (HGSIGAGVDW), 353–369 (YDQRNTGIYLTGLQQVG), 371–381 (FTFEGAARNDD), 385–400 (FGRHGTWQTSAGWEFI), 403–417 (YRFIASYGTSYKAPN), 434–443 (KSKQWEGAFE), 449–458 (VNWRISGYRN), 473–490 (YYNEGKARIKGVEATANF), 494–509 (PLTHTVSYDYVDARNA), 517–529 (RRAKQQVKYQLDW), and 535–550 (DWGITYQYLGTRYDKD). Residue Thr-309 participates in cyanocob(III)alamin binding. Arg-517 contacts cyanocob(III)alamin. Tyr-551 serves as a coordination point for cyanocob(III)alamin. 3 beta stranded membrane-spanning segments follow: residues 558-572 (TVKMGGVSLWDLAVA), 585-596 (IANLFDKDYETV), and 602-614 (AGREYTLSGSYTF). Residues 597–614 (YGYQTAGREYTLSGSYTF) carry the TonB C-terminal box motif.

This sequence belongs to the TonB-dependent receptor family. BtuB (TC 1.B.14.3.1) subfamily.

The protein localises to the cell outer membrane. Functionally, involved in the active translocation of vitamin B12 (cyanocobalamin) across the outer membrane to the periplasmic space. It derives its energy for transport by interacting with the trans-periplasmic membrane protein TonB. In Escherichia coli O139:H28 (strain E24377A / ETEC), this protein is Vitamin B12 transporter BtuB.